The following is a 294-amino-acid chain: Acetylglutamate kinase (294 aa).

Residues 63–64, R85, and N188 contribute to the substrate site; that span reads GG.

This sequence belongs to the acetylglutamate kinase family. ArgB subfamily.

The protein resides in the cytoplasm. It carries out the reaction N-acetyl-L-glutamate + ATP = N-acetyl-L-glutamyl 5-phosphate + ADP. Its pathway is amino-acid biosynthesis; L-arginine biosynthesis; N(2)-acetyl-L-ornithine from L-glutamate: step 2/4. Catalyzes the ATP-dependent phosphorylation of N-acetyl-L-glutamate. The protein is Acetylglutamate kinase of Methanococcus maripaludis (strain C5 / ATCC BAA-1333).